The primary structure comprises 497 residues: 3-octaprenyl-4-hydroxybenzoate carboxy-lyase (497 aa).

N175 serves as a coordination point for Mn(2+). Prenylated FMN contacts are provided by residues 178 to 180, 192 to 194, and 197 to 198; these read IYR, RWL, and RG. E241 is a Mn(2+) binding site. The active-site Proton donor is D290.

This sequence belongs to the UbiD family. In terms of assembly, homohexamer. Prenylated FMN is required as a cofactor. Mn(2+) serves as cofactor.

It is found in the cell membrane. The catalysed reaction is a 4-hydroxy-3-(all-trans-polyprenyl)benzoate + H(+) = a 2-(all-trans-polyprenyl)phenol + CO2. It participates in cofactor biosynthesis; ubiquinone biosynthesis. Functionally, catalyzes the decarboxylation of 3-octaprenyl-4-hydroxy benzoate to 2-octaprenylphenol, an intermediate step in ubiquinone biosynthesis. This chain is 3-octaprenyl-4-hydroxybenzoate carboxy-lyase, found in Escherichia coli O157:H7.